The following is a 154-amino-acid chain: MSQAGQSSRTITLEEALEQLSLLESQLNQLQATIREIEVRIAQLTAVEDALASLAEGAEDALIPLDGRGTVLVPASIKKLERILVHAGLNVFVEVDREKALEYLRDEKAALSKLLDAYSREYARLAQYYSALRSAIESALQAAPPQAKSQQSQQ.

It belongs to the prefoldin alpha subunit family. Heterohexamer of two alpha and four beta subunits.

It is found in the cytoplasm. Its function is as follows. Molecular chaperone capable of stabilizing a range of proteins. Seems to fulfill an ATP-independent, HSP70-like function in archaeal de novo protein folding. This chain is Prefoldin subunit alpha, found in Hyperthermus butylicus (strain DSM 5456 / JCM 9403 / PLM1-5).